A 244-amino-acid polypeptide reads, in one-letter code: tRNA pseudouridine synthase A 2 (244 aa).

Asp-52 acts as the Nucleophile in catalysis. Residue Tyr-110 coordinates substrate.

The protein belongs to the tRNA pseudouridine synthase TruA family. Homodimer.

The enzyme catalyses uridine(38/39/40) in tRNA = pseudouridine(38/39/40) in tRNA. In terms of biological role, formation of pseudouridine at positions 38, 39 and 40 in the anticodon stem and loop of transfer RNAs. This chain is tRNA pseudouridine synthase A 2, found in Clostridium perfringens (strain 13 / Type A).